We begin with the raw amino-acid sequence, 24 residues long: Positive regulator of RepFIC repA1 expression (24 aa).

In Escherichia coli, this protein is Positive regulator of RepFIC repA1 expression (repL).